A 262-amino-acid polypeptide reads, in one-letter code: ATP synthase subunit a (262 aa).

7 helical membrane passes run 30–50 (ITSLTNIAILFIIGLLVLTIF), 64–84 (WNIVLETWVASILGIVKDQIG), 91–111 (LIYFPLIFTFFSFVFISNILG), 123–143 (ISVTLGLSIAIMIGVTLIGFS), 149–169 (FFSLFVPKGTPLALVPLLVLI), 195–215 (LFGVISALSVSACIAVSSLLL), and 220–240 (ITLPLAVLVVLYGLELLVALL).

Belongs to the ATPase A chain family. In terms of assembly, F-type ATPases have 2 components, CF(1) - the catalytic core - and CF(0) - the membrane proton channel. CF(1) has five subunits: alpha(3), beta(3), gamma(1), delta(1), epsilon(1). CF(0) has three main subunits: a, b and c.

Its subcellular location is the mitochondrion inner membrane. Mitochondrial membrane ATP synthase (F(1)F(0) ATP synthase or Complex V) produces ATP from ADP in the presence of a proton gradient across the membrane which is generated by electron transport complexes of the respiratory chain. F-type ATPases consist of two structural domains, F(1) - containing the extramembraneous catalytic core and F(0) - containing the membrane proton channel, linked together by a central stalk and a peripheral stalk. During catalysis, ATP synthesis in the catalytic domain of F(1) is coupled via a rotary mechanism of the central stalk subunits to proton translocation. Key component of the proton channel; it may play a direct role in the translocation of protons across the membrane. The polypeptide is ATP synthase subunit a (ATP6) (Allomyces macrogynus).